The primary structure comprises 132 residues: Ribosome-binding factor A (132 aa).

The protein belongs to the RbfA family. In terms of assembly, monomer. Binds 30S ribosomal subunits, but not 50S ribosomal subunits or 70S ribosomes.

It is found in the cytoplasm. In terms of biological role, one of several proteins that assist in the late maturation steps of the functional core of the 30S ribosomal subunit. Associates with free 30S ribosomal subunits (but not with 30S subunits that are part of 70S ribosomes or polysomes). Required for efficient processing of 16S rRNA. May interact with the 5'-terminal helix region of 16S rRNA. This Xanthomonas campestris pv. campestris (strain 8004) protein is Ribosome-binding factor A.